We begin with the raw amino-acid sequence, 245 residues long: Adenosylcobinamide-GDP ribazoletransferase (245 aa).

5 helical membrane passes run 31-51 (LLHY…AALL), 57-77 (PLLQ…ALHL), 109-129 (VAVV…LVVL), 134-154 (PAAL…LFLC), and 176-196 (ALMV…TGLL).

Belongs to the CobS family. It depends on Mg(2+) as a cofactor.

The protein localises to the cell inner membrane. The enzyme catalyses alpha-ribazole + adenosylcob(III)inamide-GDP = adenosylcob(III)alamin + GMP + H(+). The catalysed reaction is alpha-ribazole 5'-phosphate + adenosylcob(III)inamide-GDP = adenosylcob(III)alamin 5'-phosphate + GMP + H(+). The protein operates within cofactor biosynthesis; adenosylcobalamin biosynthesis; adenosylcobalamin from cob(II)yrinate a,c-diamide: step 7/7. Functionally, joins adenosylcobinamide-GDP and alpha-ribazole to generate adenosylcobalamin (Ado-cobalamin). Also synthesizes adenosylcobalamin 5'-phosphate from adenosylcobinamide-GDP and alpha-ribazole 5'-phosphate. The chain is Adenosylcobinamide-GDP ribazoletransferase from Stutzerimonas stutzeri (strain A1501) (Pseudomonas stutzeri).